The primary structure comprises 508 residues: Zinc finger CCCH-type with G patch domain-containing protein (508 aa).

The interval 67 to 86 (QQESSHHDSGTPETDTKTSV) is disordered. Residues 69 to 86 (ESSHHDSGTPETDTKTSV) show a composition bias toward basic and acidic residues. The segment at 161–188 (RSMVPCPYFLEGKCKFAGAECRFSHGYL) adopts a C3H1-type zinc-finger fold. The tract at residues 253 to 282 (IYPLGPEEVESDSESDSQSDTGDSSSSKAA) is disordered. The segment covering 259–269 (EEVESDSESDS) has biased composition (acidic residues). The span at 270 to 279 (QSDTGDSSSS) shows a compositional bias: low complexity. In terms of domain architecture, G-patch spans 310-356 (TKGIGSKLMAKMGYIFGKGLGKDGEGRVEPIEVVVLPQGKSLDKCAE). The segment at 404–426 (SLHDLRVSHPGAKPDIRKTRKSA) is disordered.

Its subcellular location is the nucleus. In terms of biological role, transcription repressor. The chain is Zinc finger CCCH-type with G patch domain-containing protein from Nematostella vectensis (Starlet sea anemone).